Consider the following 116-residue polypeptide: Nucleoid-associated protein EUBELI_02017 (116 aa).

Residues 1–12 are compositionally biased toward gly residues; that stretch reads MAKRGGFPGGMP. The disordered stretch occupies residues 1–42; that stretch reads MAKRGGFPGGMPGNMNNLMKQAQRMQRQMEEQQAELENKEFS. Positions 13-26 are enriched in low complexity; the sequence is GNMNNLMKQAQRMQ.

The protein belongs to the YbaB/EbfC family. Homodimer.

The protein resides in the cytoplasm. It is found in the nucleoid. In terms of biological role, binds to DNA and alters its conformation. May be involved in regulation of gene expression, nucleoid organization and DNA protection. The sequence is that of Nucleoid-associated protein EUBELI_02017 from Lachnospira eligens (strain ATCC 27750 / DSM 3376 / VPI C15-48 / C15-B4) (Eubacterium eligens).